We begin with the raw amino-acid sequence, 510 residues long: Gelatinase (510 aa).

Residues 1–30 form the signal peptide; it reads MMKGNKILYILGTGIFVGSSCLFSSLFVAA. Positions 31–192 are excised as a propeptide; the sequence is EEQVYSESEV…IMEKQDLTEH (162 aa). Aspartate 324 is a binding site for Ca(2+). Histidine 328 contacts Zn(2+). Glutamate 329 is an active-site residue. Positions 332 and 352 each coordinate Zn(2+). Serine 376 contacts Ca(2+). Catalysis depends on histidine 419, which acts as the Proton donor.

This sequence belongs to the peptidase M4 family.

It is found in the secreted. It carries out the reaction Preferential cleavage: Xaa-|-Leu, Xaa-|-Phe, Xaa-|-Tyr, Xaa-|-Ala.. Its activity is regulated as follows. Inhibited by L-leucine hydroxamate and phosphoramidon. Not inhibited by phenylmethanesulfonyl fluoride. Reversibly inactivated by straight-chain aliphatic alcohols. Functionally, metalloprotease capable of the hydrolysis of insoluble hydrophobic substrates. Hydrolyzes azocoll and gelatin and, at a lower rate, soluble and insoluble collagens. Does not cleave short synthetic peptides. Preferentially hydrolyzes the 24-Phe-|-Phe-25 bond in the insulin B-chain, followed by the 5-His-|-Leu-6 bond. Inactivates endothelin-1, primarily by cleavage of the 5-Ser-|-Leu-6 and 16-His-|-Leu-17 bonds. Hydrolyzes the alpha chain of C3 to generate a C3b-like protein. Inhibits complement-mediated hemolysis and opsinization of bacteria. Hydrolyzes the insect antimicrobial peptide cecropin. Decreases the length of E.faecalis chains via the activation of autolysin. Degrades polymerized fibrin. In Enterococcus faecalis (strain ATCC 700802 / V583), this protein is Gelatinase.